We begin with the raw amino-acid sequence, 102 residues long: Large ribosomal subunit protein bL21 (102 aa).

Belongs to the bacterial ribosomal protein bL21 family. Part of the 50S ribosomal subunit. Contacts protein L20.

Its function is as follows. This protein binds to 23S rRNA in the presence of protein L20. In Lachnoclostridium phytofermentans (strain ATCC 700394 / DSM 18823 / ISDg) (Clostridium phytofermentans), this protein is Large ribosomal subunit protein bL21.